The chain runs to 125 residues: MTGEPSLCIRGCGFFSTSQTKNLCSKCYNDFLKDESARYLATFNVNTKAAEEVTAQEATVLGSKGGCACKKKVGLLGFHCRCGHLFFASHRYPEEHSCPSDYKSAAIDVLAKQNPVVKGDKLFRL.

The A20-type zinc finger occupies 2-36; that stretch reads TGEPSLCIRGCGFFSTSQTKNLCSKCYNDFLKDES. Zn(2+) is bound by residues cysteine 8, cysteine 12, cysteine 24, cysteine 27, cysteine 80, cysteine 82, histidine 96, and cysteine 98. The AN1-type; degenerate zinc finger occupies 61–106; the sequence is LGSKGGCACKKKVGLLGFHCRCGHLFFASHRYPEEHSCPSDYKSAA.

Its function is as follows. May be involved in environmental stress response. The sequence is that of Putative zinc finger A20 and AN1 domain-containing stress-associated protein 8 (SAP8) from Arabidopsis thaliana (Mouse-ear cress).